A 495-amino-acid polypeptide reads, in one-letter code: Surface E' protein (495 aa).

A helical membrane pass occupies residues 224 to 235 (GTLIGLVALIGV).

It is found in the cell membrane. The polypeptide is Surface E' protein (cbbE') (Coxiella burnetii).